The following is a 427-amino-acid chain: Histidine--tRNA ligase (427 aa).

The protein belongs to the class-II aminoacyl-tRNA synthetase family. As to quaternary structure, homodimer.

The protein localises to the cytoplasm. The catalysed reaction is tRNA(His) + L-histidine + ATP = L-histidyl-tRNA(His) + AMP + diphosphate + H(+). The polypeptide is Histidine--tRNA ligase (Corynebacterium urealyticum (strain ATCC 43042 / DSM 7109)).